We begin with the raw amino-acid sequence, 493 residues long: D-aminoacyl-tRNA deacylase (493 aa).

A compositionally biased stretch (basic and acidic residues) spans 22–37 (DLGDWERRDDPSRPDA). 2 disordered regions span residues 22–44 (DLGDWERRDDPSRPDADGGGTYY) and 441–493 (PEGP…EPSE).

The protein belongs to the DtdA deacylase family. In terms of assembly, monomer. The cofactor is Zn(2+).

The catalysed reaction is a D-aminoacyl-tRNA + H2O = a tRNA + a D-alpha-amino acid + H(+). It carries out the reaction glycyl-tRNA(Ala) + H2O = tRNA(Ala) + glycine + H(+). Its function is as follows. D-aminoacyl-tRNA deacylase with broad substrate specificity. By recycling D-aminoacyl-tRNA to D-amino acids and free tRNA molecules, this enzyme counteracts the toxicity associated with the formation of D-aminoacyl-tRNA entities in vivo. The sequence is that of D-aminoacyl-tRNA deacylase from Halorubrum lacusprofundi (strain ATCC 49239 / DSM 5036 / JCM 8891 / ACAM 34).